We begin with the raw amino-acid sequence, 267 residues long: Strigolactone esterase D14 (267 aa).

The active-site Nucleophile is the Ser-97. Residues Asp-218 and His-247 contribute to the active site.

It belongs to the AB hydrolase superfamily. As to quaternary structure, interacts with SMXL6, SMXL7 and SMXL8. The interaction with SMXLs occurs in the presence of (2'R) stereoisomers of strigolactones, but not (2'S) stereoisomers. Interacts with MAX2. Forms a complex with MAX2 and SKP1A/ASK1 in presence of strigolactone. Expressed at high levels in rosette and cauline leaves and at lower levels in axillary buds, inflorescences, stems, roots and developing vascular tissue of cotyledons.

It is found in the cytoplasm. It localises to the nucleus. In terms of biological role, involved in strigolactone signaling pathway. Does not move long distances acropetally in the plant to regulate shoot branching and is rapidly degraded in the presence of strigolactones. Functions downstream of strigolactone synthesis, as a component of hormone signaling and as an enzyme that participates in the conversion of strigolactones to the bioactive form. Acts probably as a strigolactone receptor. Strigolactones are hormones that inhibit tillering and shoot branching through the MAX-dependent pathway, contribute to the regulation of shoot architectural response to phosphate-limiting conditions and function as rhizosphere signal that stimulates hyphal branching of arbuscular mycorrhizal fungi and trigger seed germination of root parasitic weeds. Hydrolyzes methyl carlactonoate (MeCLA), but not carlactone (CL) or carlactonoic acid (CLA). Hydrolyzes the butenolide ring of strigolactones. The initial nucleophilic attack causes an electron shift, followed by the addition of a water molecule, to lead to the release of the ABC ring product and the formation of a 'Ser-97'-stabilized open lactone intermediate. Has no esterase activity for 4-nitrophenyl butyrate. Binds and hydrolyzes the synthetic strigolactone analog GR24 in vitro. Forms a stable covalent complex with the D-ring of strigolactone, which is essential for hormone bioactivity. The D-ring is attached to His-247 of the catalytic triad. The hydrolysis of strigolactone into a covalently linked intermediate molecule initiates a conformational change of D14 to facilitate interaction with MAX2 and formation of the D14-MAX2-SKP1/ASK1 complex to trigger strigolactone signaling. This mechanism defines D14 as a non-canonical hormone receptor with dual functions to generate and sense the active form of strigolactone. This is Strigolactone esterase D14 from Arabidopsis thaliana (Mouse-ear cress).